The chain runs to 467 residues: Regulatory protein NPR6 (467 aa).

Positions 27–111 (SDVTFSVEGR…LYSGQVSIVP (85 aa)) constitute a BTB domain. Residues 117–131 (RSNCGDRGCWHTHCT) form a C2HC NPR-type zinc finger. 4 residues coordinate Zn(2+): C120, C125, H127, and C130. ANK repeat units follow at residues 247–276 (QKIRRMRRALDSSDVELVKLMVMGEGLNLD), 277–306 (ESLALIYAVENCSREVVKALLELGAADVNY), 311–340 (TGKTALHIAAEMVSPDMVAVLLDHHADPNV), and 344–378 (DGITPLDILRTLTSDFLFKGAIPGLTHIEPNKLRL). The interval 434-467 (RDIGDDNSNQREGMNLHHHHHDPSTMYHHHHHHF) is disordered. Residues 449–467 (LHHHHHDPSTMYHHHHHHF) are compositionally biased toward basic residues.

Belongs to the plant 'ANKYRIN-BTB/POZ' family. 'NOOT-BOP-COCH-like' (NBCL) subfamily. In terms of assembly, homodimer or heterodimer with BOP2. Interacts with PAN.

It localises to the cytoplasm. The protein resides in the nucleus. It participates in protein modification; protein ubiquitination. May act as a substrate-specific adapter of an E3 ubiquitin-protein ligase complex (CUL3-RBX1-BTB) which mediates the ubiquitination and subsequent proteasomal degradation of target proteins. Acts redundantly with BOP2. BOP1/2 promote leaf and floral meristem fate and determinacy in a pathway targeting AP1 and AGL24. BOP1/2 act as transcriptional co-regulators through direct interaction with TGA factors, including PAN, a direct regulator of AP1. Controls lateral organ fate through positive regulation of adaxial-abaxial polarity genes ATHB-14/PHB, YAB1/FIL and YAB3, and through positive regulation of LOB domain-containing genes LOB, LBD6/AS2 and LBD36. Promotes and maintains a developmentally determinate state in leaf cells through the negative regulation of JAG, JGL and class I KNOX genes. Is also involved in nectary development, formation of normal abscission zones (AZs) and suppression of bract formation, probably by regulating the cell wall disorganization. In Arabidopsis thaliana (Mouse-ear cress), this protein is Regulatory protein NPR6.